We begin with the raw amino-acid sequence, 503 residues long: Arabinose import ATP-binding protein AraG (503 aa).

2 ABC transporter domains span residues 5-240 (LRFD…MVGR) and 253-497 (LGDV…LPQG). 37-44 (GENGAGKS) lines the ATP pocket.

Belongs to the ABC transporter superfamily. Arabinose importer (TC 3.A.1.2.2) family. In terms of assembly, the complex is composed of two ATP-binding proteins (AraG), two transmembrane proteins (AraH) and a solute-binding protein (AraF).

It is found in the cell inner membrane. It carries out the reaction L-arabinose(out) + ATP + H2O = L-arabinose(in) + ADP + phosphate + H(+). Part of the ABC transporter complex AraFGH involved in arabinose import. Responsible for energy coupling to the transport system. The sequence is that of Arabinose import ATP-binding protein AraG from Burkholderia pseudomallei (strain K96243).